Reading from the N-terminus, the 281-residue chain is Imidazoleglycerol-phosphate dehydratase, chloroplastic (281 aa).

Residues 1–85 (MELYAASHSL…TSLPFHPETR (85 aa)) constitute a chloroplast transit peptide. Substrate contacts are provided by residues E95, 121-129 (HMLDQLASH), 147-151 (HHTNE), R173, and R195. Residues H121, H147, H148, and E151 each coordinate Mn(2+). Residues H219, H243, H244, and E247 each coordinate Mn(2+). Residues 243–251 (HHIIEATFK) and 273–275 (SSK) each bind substrate.

This sequence belongs to the imidazoleglycerol-phosphate dehydratase family. It depends on Mn(2+) as a cofactor.

The protein resides in the plastid. Its subcellular location is the chloroplast. The catalysed reaction is D-erythro-1-(imidazol-4-yl)glycerol 3-phosphate = 3-(imidazol-4-yl)-2-oxopropyl phosphate + H2O. The protein operates within amino-acid biosynthesis; L-histidine biosynthesis; L-histidine from 5-phospho-alpha-D-ribose 1-diphosphate: step 6/9. This is Imidazoleglycerol-phosphate dehydratase, chloroplastic from Pisum sativum (Garden pea).